A 63-amino-acid chain; its full sequence is Large ribosomal subunit protein uL29 (63 aa).

This sequence belongs to the universal ribosomal protein uL29 family.

This is Large ribosomal subunit protein uL29 from Actinobacillus succinogenes (strain ATCC 55618 / DSM 22257 / CCUG 43843 / 130Z).